We begin with the raw amino-acid sequence, 165 residues long: Protein SprT (165 aa).

One can recognise a SprT-like domain in the interval 22–163 (LAQANLKLDR…RCVHCGEPLV (142 aa)). H78 lines the Zn(2+) pocket. E79 is a catalytic residue. H82 is a binding site for Zn(2+).

Belongs to the SprT family. Zn(2+) serves as cofactor.

It localises to the cytoplasm. This chain is Protein SprT, found in Salmonella agona (strain SL483).